We begin with the raw amino-acid sequence, 156 residues long: MKLNELRDNPGASPKRTRVGRGPGSGKGKMGGRGIKGQKSRSGVAINGYEGGQMPLYQRLPKRGFNKPNAKKYAVVNLGLIQKFIDAGKLDAASITEDSLVASGLVRRKLDGIRVLAKGEFTAKATIAVTGASKSAVEAVSKAGGALTVASEAAAE.

Residues 1–44 (MKLNELRDNPGASPKRTRVGRGPGSGKGKMGGRGIKGQKSRSGV) are disordered. The segment covering 21-35 (RGPGSGKGKMGGRGI) has biased composition (gly residues).

Belongs to the universal ribosomal protein uL15 family. In terms of assembly, part of the 50S ribosomal subunit.

Functionally, binds to the 23S rRNA. In Ruegeria sp. (strain TM1040) (Silicibacter sp.), this protein is Large ribosomal subunit protein uL15.